We begin with the raw amino-acid sequence, 381 residues long: Actin-binding Rho-activating protein (381 aa).

Disordered stretches follow at residues 39–156 (ENSI…SHGS) and 179–207 (QEEP…PEQD). Positions 69–79 (PTSHQKAQSAP) are enriched in polar residues. Over residues 97-110 (KAPEVSHIKKKEVS) the composition is skewed to basic and acidic residues. S156 and S188 each carry phosphoserine. Positions 179–188 (QEEPTWRSDS) are enriched in basic and acidic residues. Actin-binding stretches follow at residues 199 to 299 (EAEE…AERA) and 300 to 381 (KRAE…TLLK). Interaction with actin stretches follow at residues 240–285 (SPVG…GDEG) and 352–381 (MRAR…TLLK).

In terms of assembly, binds F-actin and ABLIM1, ABLIM2 and ABLIM3. Interaction with ABLIM2 and ABLIM3 enhances activity.

The protein localises to the cytoplasm. The protein resides in the myofibril. It localises to the sarcomere. Its subcellular location is the cytoskeleton. In terms of biological role, acts as an activator of serum response factor (SRF)-dependent transcription possibly by inducing nuclear translocation of MKL1 or MKL2 and through a mechanism requiring Rho-actin signaling. The polypeptide is Actin-binding Rho-activating protein (Homo sapiens (Human)).